The chain runs to 375 residues: MKFELDTTDGRARRGRLVFDRGVVETPAFMPVGTYGTVKGMTPEEVEATGAQIILGNTFHLWLRPGQEIMKLHGDLHDFMQWKGPILTDSGGFQVFSLGDIRKITEQGVHFRNPINGDPIFLDPEKSMEIQYDLGSDIVMIFDECTPYPADWDYAKRSMEMSLRWAKRSRDRFDSLGNKNALFGIIQGSVYEDLRDISVKGLVEIGFDGYAVGGLAVGEPKADMHRILEHVCPQIPADKPRYLMGVGKPEDLVEGVRRGIDMFDCVMPTRNARNGHLFVTDGVVKIRNAKHKSDTSPLDAECDCYTCRNYSRAYLHHLDRCNEILGARLNTIHNLRYYQRLMAGLRKAIEEGKLESFVTEFYQRQGRPVPPLNVD.

Aspartate 89 acts as the Proton acceptor in catalysis. Substrate-binding positions include 89-93 (DSGGF), aspartate 143, glutamine 187, and glycine 214. The segment at 245–251 (GVGKPED) is RNA binding. The active-site Nucleophile is aspartate 264. Positions 269-273 (TRNAR) are RNA binding; important for wobble base 34 recognition. Residues cysteine 302, cysteine 304, cysteine 307, and histidine 333 each contribute to the Zn(2+) site.

It belongs to the queuine tRNA-ribosyltransferase family. As to quaternary structure, homodimer. Within each dimer, one monomer is responsible for RNA recognition and catalysis, while the other monomer binds to the replacement base PreQ1. Zn(2+) serves as cofactor.

The catalysed reaction is 7-aminomethyl-7-carbaguanine + guanosine(34) in tRNA = 7-aminomethyl-7-carbaguanosine(34) in tRNA + guanine. Its pathway is tRNA modification; tRNA-queuosine biosynthesis. Its function is as follows. Catalyzes the base-exchange of a guanine (G) residue with the queuine precursor 7-aminomethyl-7-deazaguanine (PreQ1) at position 34 (anticodon wobble position) in tRNAs with GU(N) anticodons (tRNA-Asp, -Asn, -His and -Tyr). Catalysis occurs through a double-displacement mechanism. The nucleophile active site attacks the C1' of nucleotide 34 to detach the guanine base from the RNA, forming a covalent enzyme-RNA intermediate. The proton acceptor active site deprotonates the incoming PreQ1, allowing a nucleophilic attack on the C1' of the ribose to form the product. After dissociation, two additional enzymatic reactions on the tRNA convert PreQ1 to queuine (Q), resulting in the hypermodified nucleoside queuosine (7-(((4,5-cis-dihydroxy-2-cyclopenten-1-yl)amino)methyl)-7-deazaguanosine). The protein is Queuine tRNA-ribosyltransferase of Salmonella agona (strain SL483).